A 237-amino-acid polypeptide reads, in one-letter code: Ubiquitin-conjugating enzyme E2 34 (237 aa).

Positions 5-162 (ACIKRLQKEY…FPEYVEKYNQ (158 aa)) constitute a UBC core domain. C87 acts as the Glycyl thioester intermediate in catalysis. Residues 168–207 (QATTQLTTPESPQKSDTKVESEKTIDPTKGDSEGGLKERK) are disordered. Basic and acidic residues predominate over residues 180–204 (QKSDTKVESEKTIDPTKGDSEGGLK). Residues 214–234 (LPAWIILLLVSVFGVVMALPL) traverse the membrane as a helical segment.

It belongs to the ubiquitin-conjugating enzyme family.

The protein resides in the membrane. It catalyses the reaction S-ubiquitinyl-[E1 ubiquitin-activating enzyme]-L-cysteine + [E2 ubiquitin-conjugating enzyme]-L-cysteine = [E1 ubiquitin-activating enzyme]-L-cysteine + S-ubiquitinyl-[E2 ubiquitin-conjugating enzyme]-L-cysteine.. Its pathway is protein modification; protein ubiquitination. Functionally, accepts the ubiquitin from the E1 complex and catalyzes its covalent attachment to other proteins. This Arabidopsis thaliana (Mouse-ear cress) protein is Ubiquitin-conjugating enzyme E2 34 (UBC34).